A 563-amino-acid chain; its full sequence is Sperm-tail PG-rich repeat-containing protein 2 (563 aa).

STPGR repeat units follow at residues 21 to 34, 63 to 73, and 97 to 107; these read VGPGTYQVPFPKQQ, PGPAHYNVSQA, and GPGPASYDCPY. The disordered stretch occupies residues 131-163; that stretch reads IPSIPSSGKSHGYHLNEDDTIMRRTPPSSDKTM. STPGR repeat units lie at residues 200–219, 250–263, 292–321, 334–353, 423–438, 473–483, and 507–518; these read GPGPGHYDIIQKRKLRYENI, PGPGKYNIKSQFDH, TPAPGTYNETRTAFKVPKKRSGLFSPFGQR, LPGPGFYDISTNIVKAQVKK, LPAPGCYDVQKSYDMS, GPGPATYNPIL, and SPGPTTYELSPF.

The sequence is that of Sperm-tail PG-rich repeat-containing protein 2 (Stpg2) from Rattus norvegicus (Rat).